The chain runs to 437 residues: MSTLLLVEAFYGGSHKQLMDLIKEEVEGCILYTLPAKKWHWRARTAALYFMQAILPSDTYRVLFTSSVLNLAELVALRPDLGKLKKILYFHENQLIYPVQKSQERDFQYGYNQILSCLVADTVVFNSAFNMESFLTSIKTFLKKIPDHRPKNLEEIIRPKCRVLYFPINFPDIRQYLPEHKCIPHNLVDKSSSDISYCPKTSIQTGRMSVEFSDHQIQCSIDESSAEQEKTTVSEKNNCEGVDHVILHSQSTLAGDIHQEKPLHIVWPHRWEHDKDPETFFKVLLKLKEKELTFHLSVLGETFTDVPDIFSEARITLGSSVLHWGYLASKDDYLQALCMADVVVSTAKHEFFGVAMLEAVHCGCYPLCPKSLVYPEIFPAVYLYSSPEQLLRKLEDFCKRPDIVRRHRFQGETERFSWAALRGEFRSLLDAEPREDL.

Belongs to the glycosyltransferase group 1 family. Glycosyltransferase 4 subfamily.

It localises to the cytoplasm. The protein localises to the nucleus. The enzyme catalyses queuosine(34) in tRNA(Asp) + GDP-alpha-D-mannose = O-4''-alpha-D-mannosylqueuosine(34) in tRNA(Asp) + GDP + H(+). In terms of biological role, glycosyltransferase that specifically catalyzes mannosylation of cytoplasmic tRNA(Asp) modified with queuosine at position 34 (queuosine(34)). Mannosylates the cyclopentene moiety of queuosine(34) in tRNA(Asp) to form mannosyl-queuosine(34). Mannosylation of queuosine(34) in tRNA(Asp) is required to slow-down elongation at cognate codons, GAC and GAU, thereby regulating protein translation. This is tRNA-queuosine alpha-mannosyltransferase (gtdc1) from Xenopus laevis (African clawed frog).